A 144-amino-acid chain; its full sequence is Large ribosomal subunit protein uL15 (144 aa).

Residues 1–53 (MFLNTIKPGEGAKHAKRRVGRGIGSGLGKTAGRGHKGQKSRSGGFHKVGFEGG) form a disordered region. Gly residues predominate over residues 21-31 (RGIGSGLGKTA).

It belongs to the universal ribosomal protein uL15 family. In terms of assembly, part of the 50S ribosomal subunit.

Its function is as follows. Binds to the 23S rRNA. This is Large ribosomal subunit protein uL15 from Laribacter hongkongensis (strain HLHK9).